Reading from the N-terminus, the 4923-residue chain is Bridge-like lipid transfer protein family member 1 (4923 aa).

Residues 25–45 (FVWLLVATIMSCGWIIYLTYY) form a helical membrane-spanning segment. 21 disordered regions span residues 160 to 179 (NRDE…SVHI), 606 to 631 (HSKS…KPRW), 1203 to 1277 (SLHV…SARL), 1300 to 1334 (FSSE…DSST), 1357 to 1400 (TEEF…SVEG), 1471 to 1494 (TNKR…SEES), 1630 to 1660 (SAAK…DLSI), 1878 to 1948 (RDGV…PDSS), 2191 to 2235 (SKSH…LQCN), 2262 to 2281 (PHRA…RTGN), 2355 to 2375 (NTLD…QEDL), 2550 to 2655 (RYTA…SEQS), 2885 to 2910 (IRQP…VSIN), 3564 to 3596 (YSNS…IKVE), 3645 to 3695 (FSPT…RKSA), 3739 to 3797 (LHPS…SLQS), 3848 to 3884 (GMRD…AKGK), 4017 to 4071 (PTSA…TGPP), 4102 to 4124 (AVTG…SSVT), 4249 to 4309 (DGQT…AAAQ), and 4797 to 4827 (RMFA…EKEE). Over residues 1210–1226 (SHSSASSSEENSSSSAA) the composition is skewed to low complexity. Residues 1237–1248 (PSPSTELMNVTT) show a composition bias toward polar residues. The span at 1260–1271 (SPLRSPLKRQSS) shows a compositional bias: low complexity. The segment covering 1641 to 1658 (TEGTTPGSLSTPHGQTDL) has biased composition (polar residues). Over residues 1887–1898 (SSGSQTGSGYST) the composition is skewed to low complexity. Over residues 1907–1920 (NDAQSPASEPNNNS) the composition is skewed to polar residues. Residues 1921 to 1931 (DSDEQDEGVES) show a composition bias toward acidic residues. Polar residues-rich tracts occupy residues 2208–2218 (PYQSLSYTSGD) and 2267–2281 (EQTA…RTGN). Over residues 2550-2560 (RYTAGSSSPTP) the composition is skewed to polar residues. Positions 2606-2624 (TRSREPRGRGTLGRSERRT) are enriched in basic and acidic residues. Basic and acidic residues predominate over residues 3581–3595 (KRSDRPREDLPDIKV). A compositionally biased stretch (basic and acidic residues) spans 3746 to 3770 (TEHEDLALRRSCERSSRSLDQDSPP). Positions 4017 to 4039 (PTSATYPSEGQHTPSSTPPSVHN) are enriched in polar residues. The segment covering 4044 to 4056 (PGGPSTGLGSPLG) has biased composition (low complexity). 3 stretches are compositionally biased toward polar residues: residues 4249–4268 (DGQT…TPSH), 4276–4286 (TGRTRSVSDSS), and 4804–4814 (GQKSPTTQQDE). The segment covering 4816 to 4827 (SSDKKEEREKEE) has biased composition (basic and acidic residues).

Its subcellular location is the cell membrane. The protein resides in the endoplasmic reticulum membrane. The protein localises to the mitochondrion membrane. Functionally, tube-forming lipid transport protein which provides phosphatidylethanolamine for glycosylphosphatidylinositol (GPI) anchor synthesis in the endoplasmic reticulum. Plays a role in endosomal trafficking and endosome recycling. Also involved in the actin cytoskeleton and cilia structural dynamics. Acts as a regulator of phagocytosis. The sequence is that of Bridge-like lipid transfer protein family member 1 (bltp1) from Danio rerio (Zebrafish).